Here is a 497-residue protein sequence, read N- to C-terminus: Guanosine-5'-triphosphate,3'-diphosphate pyrophosphatase (497 aa).

It belongs to the GppA/Ppx family. GppA subfamily.

It catalyses the reaction guanosine 3'-diphosphate 5'-triphosphate + H2O = guanosine 3',5'-bis(diphosphate) + phosphate + H(+). It participates in purine metabolism; ppGpp biosynthesis; ppGpp from GTP: step 2/2. In terms of biological role, catalyzes the conversion of pppGpp to ppGpp. Guanosine pentaphosphate (pppGpp) is a cytoplasmic signaling molecule which together with ppGpp controls the 'stringent response', an adaptive process that allows bacteria to respond to amino acid starvation, resulting in the coordinated regulation of numerous cellular activities. This Pseudoalteromonas translucida (strain TAC 125) protein is Guanosine-5'-triphosphate,3'-diphosphate pyrophosphatase.